The primary structure comprises 159 residues: 2-C-methyl-D-erythritol 2,4-cyclodiphosphate synthase (159 aa).

A divalent metal cation is bound by residues Asp8 and His10. Residues 8-10 and 34-35 each bind 4-CDP-2-C-methyl-D-erythritol 2-phosphate; these read DVH and HS. His42 provides a ligand contact to a divalent metal cation. 4-CDP-2-C-methyl-D-erythritol 2-phosphate contacts are provided by residues 56–58, 132–135, and Arg142; these read DIG and TTTE.

Belongs to the IspF family. Homotrimer. Requires a divalent metal cation as cofactor.

The catalysed reaction is 4-CDP-2-C-methyl-D-erythritol 2-phosphate = 2-C-methyl-D-erythritol 2,4-cyclic diphosphate + CMP. The protein operates within isoprenoid biosynthesis; isopentenyl diphosphate biosynthesis via DXP pathway; isopentenyl diphosphate from 1-deoxy-D-xylulose 5-phosphate: step 4/6. Involved in the biosynthesis of isopentenyl diphosphate (IPP) and dimethylallyl diphosphate (DMAPP), two major building blocks of isoprenoid compounds. Catalyzes the conversion of 4-diphosphocytidyl-2-C-methyl-D-erythritol 2-phosphate (CDP-ME2P) to 2-C-methyl-D-erythritol 2,4-cyclodiphosphate (ME-CPP) with a corresponding release of cytidine 5-monophosphate (CMP). This Chlorobium phaeobacteroides (strain BS1) protein is 2-C-methyl-D-erythritol 2,4-cyclodiphosphate synthase.